The primary structure comprises 178 residues: Ribulose bisphosphate carboxylase small subunit, chloroplastic 4 (178 aa).

The transit peptide at 1-54 (MASISSTVATVSRAAPAQANMVAPFTGLKSNAAFPATKKANDFSTLPSNGGRVQ) directs the protein to the chloroplast.

The protein belongs to the RuBisCO small chain family. As to quaternary structure, heterohexadecamer of 8 large and 8 small subunits.

The protein localises to the plastid. It localises to the chloroplast. In terms of biological role, ruBisCO catalyzes two reactions: the carboxylation of D-ribulose 1,5-bisphosphate, the primary event in carbon dioxide fixation, as well as the oxidative fragmentation of the pentose substrate. Both reactions occur simultaneously and in competition at the same active site. Although the small subunit is not catalytic it is essential for maximal activity. This is Ribulose bisphosphate carboxylase small subunit, chloroplastic 4 from Flaveria pringlei.